A 348-amino-acid chain; its full sequence is Fe-S cluster assembly protein DRE2 (348 aa).

The interval 1 to 158 is N-terminal SAM-like domain; it reads MSQYKTGLLL…LPTFKKASSS (158 aa). The tract at residues 137-170 is disordered; sequence KTNNTKLQSGSKLPTFKKASSSTSNLPSFKKADH. Positions 144–163 are enriched in polar residues; it reads QSGSKLPTFKKASSSTSNLP. Residues 159-242 form a linker region; the sequence is TSNLPSFKKA…EEELIDEDGS (84 aa). Serine 206 is subject to Phosphoserine. [2Fe-2S] cluster-binding residues include cysteine 252, cysteine 263, cysteine 266, and cysteine 268. Residues 252-268 form a fe-S binding site A region; it reads CGKSKTKKKKACKDCTC. Positions 311, 314, 322, and 325 each coordinate [4Fe-4S] cluster. 2 consecutive short sequence motifs (cx2C motif) follow at residues 311 to 314 and 322 to 325; these read CGSC and CSGC. The fe-S binding site B stretch occupies residues 311–325; that stretch reads CGSCSLGDAFRCSGC.

It belongs to the anamorsin family. As to quaternary structure, monomer. Interacts with TAH18. Interacts with MIA40. It depends on [2Fe-2S] cluster as a cofactor. Requires [4Fe-4S] cluster as cofactor. Post-translationally, ubiquitinated.

The protein resides in the cytoplasm. It is found in the mitochondrion intermembrane space. Component of the cytosolic iron-sulfur (Fe-S) protein assembly (CIA) machinery required for the maturation of extramitochondrial Fe-S proteins. Part of an electron transfer chain functioning in an early step of cytosolic Fe-S biogenesis, facilitating the de novo assembly of a [4Fe-4S] cluster on the scaffold complex CFD1-NBP35. Electrons are transferred to DRE2 from NADPH via the FAD- and FMN-containing protein TAH18. TAH18-DRE2 are also required for the assembly of the diferric tyrosyl radical cofactor of ribonucleotide reductase (RNR), probably by providing electrons for reduction during radical cofactor maturation in the catalytic small subunit RNR2. Has anti-apoptotic effects in the cell. Involved in negative control of H(2)O(2)-induced cell death. The sequence is that of Fe-S cluster assembly protein DRE2 from Saccharomyces cerevisiae (strain ATCC 204508 / S288c) (Baker's yeast).